The chain runs to 341 residues: tRNA N6-adenosine threonylcarbamoyltransferase (341 aa).

Positions 113 and 117 each coordinate Fe cation. Substrate-binding positions include 136–140, Asp-169, Gly-182, and Asn-280; that span reads IISGG. A Fe cation-binding site is contributed by Asp-308.

It belongs to the KAE1 / TsaD family. Requires Fe(2+) as cofactor.

It is found in the cytoplasm. It catalyses the reaction L-threonylcarbamoyladenylate + adenosine(37) in tRNA = N(6)-L-threonylcarbamoyladenosine(37) in tRNA + AMP + H(+). Required for the formation of a threonylcarbamoyl group on adenosine at position 37 (t(6)A37) in tRNAs that read codons beginning with adenine. Is involved in the transfer of the threonylcarbamoyl moiety of threonylcarbamoyl-AMP (TC-AMP) to the N6 group of A37, together with TsaE and TsaB. TsaD likely plays a direct catalytic role in this reaction. In Anaplasma marginale (strain St. Maries), this protein is tRNA N6-adenosine threonylcarbamoyltransferase.